The following is a 237-amino-acid chain: Uracil-DNA glycosylase (237 aa).

Asp-77 functions as the Proton acceptor in the catalytic mechanism.

Belongs to the uracil-DNA glycosylase (UDG) superfamily. UNG family.

It is found in the cytoplasm. It carries out the reaction Hydrolyzes single-stranded DNA or mismatched double-stranded DNA and polynucleotides, releasing free uracil.. In terms of biological role, excises uracil residues from the DNA which can arise as a result of misincorporation of dUMP residues by DNA polymerase or due to deamination of cytosine. The chain is Uracil-DNA glycosylase from Acinetobacter baylyi (strain ATCC 33305 / BD413 / ADP1).